Reading from the N-terminus, the 412-residue chain is Polyferredoxin protein MvhB (412 aa).

12 4Fe-4S ferredoxin-type domains span residues 1–29 (MIVV…VTPE), 30–57 (DVIY…IEDL), 67–96 (GRIV…LDEG), 97–127 (KVKK…VEGI), 138–166 (EGPI…LEKV), 168–197 (GVIE…ISGK), 207–236 (RKFE…PKSS), 238–266 (LTVE…LDVE), 276–305 (EGLV…VVTR), 314–345 (EKVD…LVDM), 357–386 (KRVQ…LTDE), and 385–412 (DEKV…LSLK). The [4Fe-4S] cluster site is built by C9, C12, C15, and C19. [4Fe-4S] cluster contacts are provided by C76, C79, C82, C86, C107, C110, C113, C117, C146, C149, C152, C156, C177, C180, C183, C187, C216, C219, C222, C226, C246, C249, C252, and C256. [4Fe-4S] cluster-binding residues include C325, C328, C331, C335, C366, C369, C372, C376, C394, C397, C400, and C404.

The cofactor is [4Fe-4S] cluster.

This chain is Polyferredoxin protein MvhB (mvhB), found in Methanothermobacter marburgensis (strain ATCC BAA-927 / DSM 2133 / JCM 14651 / NBRC 100331 / OCM 82 / Marburg) (Methanobacterium thermoautotrophicum).